The primary structure comprises 338 residues: Clavatol oxidase claD (338 aa).

Residues 193-299 (DPMSLLRLLH…RYSVVFFYDG (107 aa)) enclose the Fe2OG dioxygenase domain. Positions 222, 224, and 280 each coordinate Fe cation. Residue Arg-290 participates in 2-oxoglutarate binding.

Belongs to the iron/ascorbate-dependent oxidoreductase family. It depends on Fe(2+) as a cofactor.

It catalyses the reaction clavatol + 2-oxoglutarate + O2 = hydroxyclavatol + succinate + CO2. The protein operates within secondary metabolite biosynthesis. Functionally, 2-oxoglutarate-dependent dioxygenase; part of the cla gene cluster that produces clavatol and ortho-quinone methide. The clavatol biosynthesis cluster cla and the terrestric acid cluster tra are both involved in the production of peniphenones and penilactones. The non-reducing PKS claF is responsible for the formation of clavatol from successive condensations of 3 malonyl-CoA units, presumably with a simple acetyl-CoA starter unit, and 2 methylation steps. The esterase claE probably collaborates with claF by catalyzing the hydrolysis of ACP-bound acyl intermediates to free the ACP from stalled intermediates. The clavatol oxidase claD then converts clavatol to hydroxyclavatol. Spontaneous dehydration of hydroxyclavatol leads to the accumulation of the highly active ortho-quinone methide. On the other hand, the PKS-NRPS hybrid traA is involved in the formation of crustosic acid, with the help of traB and traD. The polyketide synthase module (PKS) of traA is responsible for the synthesis of the polyketide backbone via the condensation of an acetyl-CoA starter unit with 3 malonyl-CoA units. The downstream nonribosomal peptide synthetase (NRPS) module then amidates the carboxyl end of the polyketide with L-malic acid. Because traA lacks a designated enoylreductase (ER) domain, the required activity is provided the enoyl reductase traG. Crustosic acid undergoes decarboxylation and isomerization to the terrestric acid, catalyzed by the 2-oxoglutarate-dependent dioxygenase traH. Both acids are further converted to the 2 gamma-butyrolactones (R)-5-methyltetronic acid and (S)-5-carboxylmethyltetronic acid, with involvement of the cytochrome P450 monooxygenase claJ. Spontaneous addition of the methide to these gamma-butyrolactones leads to peniphenone D and penilactone D, which undergo again stereospecific attacking by methide to give penilactones A and B. This Penicillium crustosum (Blue mold fungus) protein is Clavatol oxidase claD.